Consider the following 71-residue polypeptide: cAMP-dependent protein kinase inhibitor beta (71 aa).

Positions 1-21 (MTDVESVISSFASSARAGRRN) are disordered. Position 2 is a blocked amino end (Thr) (Thr2). Ser35 bears the Phosphoserine mark. The interval 51–71 (AKMKNEEKDQGQPKKPLDEDK) is disordered.

This sequence belongs to the PKI family. In terms of tissue distribution, testis.

Extremely potent competitive inhibitor of cAMP-dependent protein kinase activity, this protein interacts with the catalytic subunit of the enzyme after the cAMP-induced dissociation of its regulatory chains. The polypeptide is cAMP-dependent protein kinase inhibitor beta (Pkib) (Rattus norvegicus (Rat)).